The primary structure comprises 91 residues: UPF0223 protein SAR1071 (91 aa).

It belongs to the UPF0223 family.

The sequence is that of UPF0223 protein SAR1071 from Staphylococcus aureus (strain MRSA252).